The following is a 341-amino-acid chain: Holliday junction branch migration complex subunit RuvB (341 aa).

The large ATPase domain (RuvB-L) stretch occupies residues 1–182 (MTSSDPTLRP…FGIPTRLQFY (182 aa)). ATP contacts are provided by residues Leu21, Arg22, Gly63, Lys66, Thr67, Thr68, 129-131 (EDF), Arg172, Tyr182, and Arg219. Thr67 serves as a coordination point for Mg(2+). A small ATPAse domain (RuvB-S) region spans residues 183 to 253 (TEDELDLIVA…IADRALTRLG (71 aa)). The interval 256–341 (HLGLDLGDRR…KGPGQSDLFG (86 aa)) is head domain (RuvB-H). Residues Arg292, Arg311, and Arg316 each contribute to the DNA site.

This sequence belongs to the RuvB family. As to quaternary structure, homohexamer. Forms an RuvA(8)-RuvB(12)-Holliday junction (HJ) complex. HJ DNA is sandwiched between 2 RuvA tetramers; dsDNA enters through RuvA and exits via RuvB. An RuvB hexamer assembles on each DNA strand where it exits the tetramer. Each RuvB hexamer is contacted by two RuvA subunits (via domain III) on 2 adjacent RuvB subunits; this complex drives branch migration. In the full resolvosome a probable DNA-RuvA(4)-RuvB(12)-RuvC(2) complex forms which resolves the HJ.

It localises to the cytoplasm. It carries out the reaction ATP + H2O = ADP + phosphate + H(+). In terms of biological role, the RuvA-RuvB-RuvC complex processes Holliday junction (HJ) DNA during genetic recombination and DNA repair, while the RuvA-RuvB complex plays an important role in the rescue of blocked DNA replication forks via replication fork reversal (RFR). RuvA specifically binds to HJ cruciform DNA, conferring on it an open structure. The RuvB hexamer acts as an ATP-dependent pump, pulling dsDNA into and through the RuvAB complex. RuvB forms 2 homohexamers on either side of HJ DNA bound by 1 or 2 RuvA tetramers; 4 subunits per hexamer contact DNA at a time. Coordinated motions by a converter formed by DNA-disengaged RuvB subunits stimulates ATP hydrolysis and nucleotide exchange. Immobilization of the converter enables RuvB to convert the ATP-contained energy into a lever motion, pulling 2 nucleotides of DNA out of the RuvA tetramer per ATP hydrolyzed, thus driving DNA branch migration. The RuvB motors rotate together with the DNA substrate, which together with the progressing nucleotide cycle form the mechanistic basis for DNA recombination by continuous HJ branch migration. Branch migration allows RuvC to scan DNA until it finds its consensus sequence, where it cleaves and resolves cruciform DNA. The sequence is that of Holliday junction branch migration complex subunit RuvB from Cereibacter sphaeroides (strain ATCC 17029 / ATH 2.4.9) (Rhodobacter sphaeroides).